The chain runs to 335 residues: MISLRDIVEKLFNSEDLNYKESYQLFDYFIKGQIELPLQTSILIALKLKQETSTEIAAAVEALLDNTKEFPKINGDLAGIVGTGGDGFNTINISTTAAIVAAAAGYKVAKHGGRSVSSKSGSFDLLESFGVNIELSPQQTKECLELYNLGFLFAPFYSEGFRYIKEARTILKTRTIFNILGPLINPARPNKVVIGVYSKDLILPMAKTLINLGIDRAVVVYGSGLDEVAIHDDTYVAEIQNNQITEYKVSPVDFGIDTYAIKDLEGGLPEHNREIIKQILQGKGKQAHNAAVAVNVAMLMKLYGKDNLKQNTQEILELIKSGKCYQTLQNVISFG.

5-phospho-alpha-D-ribose 1-diphosphate-binding positions include Gly-82, Gly-85–Asp-86, Thr-90, Asn-92–Thr-95, Lys-110–Ser-118, and Ser-122. Position 82 (Gly-82) interacts with anthranilate. A Mg(2+)-binding site is contributed by Ser-94. An anthranilate-binding site is contributed by Arg-168. Mg(2+) is bound by residues Asp-226 and Glu-227.

This sequence belongs to the anthranilate phosphoribosyltransferase family. Homodimer. It depends on Mg(2+) as a cofactor.

The catalysed reaction is N-(5-phospho-beta-D-ribosyl)anthranilate + diphosphate = 5-phospho-alpha-D-ribose 1-diphosphate + anthranilate. It functions in the pathway amino-acid biosynthesis; L-tryptophan biosynthesis; L-tryptophan from chorismate: step 2/5. Functionally, catalyzes the transfer of the phosphoribosyl group of 5-phosphorylribose-1-pyrophosphate (PRPP) to anthranilate to yield N-(5'-phosphoribosyl)-anthranilate (PRA). The sequence is that of Anthranilate phosphoribosyltransferase from Francisella philomiragia subsp. philomiragia (strain ATCC 25017 / CCUG 19701 / FSC 153 / O#319-036).